A 263-amino-acid chain; its full sequence is Indolethylamine N-methyltransferase (263 aa).

Lys13 carries the N6-succinyllysine modification. S-adenosyl-L-methionine contacts are provided by residues Tyr20, Tyr25, 63 to 64, Tyr69, Asp85, and Asn90; that span reads GS. Lys96 carries the post-translational modification N6-succinyllysine. S-adenosyl-L-methionine-binding positions include 142–143 and Leu163; that span reads DV.

The protein belongs to the class I-like SAM-binding methyltransferase superfamily. NNMT/PNMT/TEMT family. In terms of assembly, monomer.

It is found in the cytoplasm. The catalysed reaction is a tertiary amine + S-adenosyl-L-methionine = a methylated tertiary amine + S-adenosyl-L-homocysteine + H(+). The enzyme catalyses a secondary amine + S-adenosyl-L-methionine = a methylated secondary amine + S-adenosyl-L-homocysteine + H(+). It carries out the reaction a primary amine + S-adenosyl-L-methionine = a methylated primary amine + S-adenosyl-L-homocysteine + H(+). It catalyses the reaction dimethyl sulfide + S-adenosyl-L-methionine = trimethylsulfonium + S-adenosyl-L-homocysteine. Functionally, catalyzes the N-methylation of tryptamine and structurally related compounds. Functions as a thioether S-methyltransferase and is active with a variety of thioethers and the corresponding selenium and tellurium compounds, including 3-methylthiopropionaldehyde, dimethyl selenide, dimethyl telluride, 2-methylthioethylamine, 2-methylthioethanol, methyl-n-propyl sulfide and diethyl sulfide. Plays an important role in the detoxification of selenium compounds. In Pongo abelii (Sumatran orangutan), this protein is Indolethylamine N-methyltransferase (INMT).